The sequence spans 225 residues: UPF0700 transmembrane protein RA0705 (225 aa).

The next 6 membrane-spanning stretches (helical) occupy residues 17–37 (VGLALVAAISFLAGMTDAIGL), 66–86 (GLLLIGGLVSFVLGNAAGVMI), 95–115 (ALLFVSALLACAALQEGQPEL), 117–137 (FVSLIFAMGAVNASVEQIEGL), 168–188 (IIQIVPWLGMFAGAIMGAVLV), and 194–214 (LALWVPSLAALLLTAAAFQIP).

The protein belongs to the UPF0700 family.

The protein resides in the cell membrane. In Rhizobium meliloti (strain 1021) (Ensifer meliloti), this protein is UPF0700 transmembrane protein RA0705.